A 1342-amino-acid chain; its full sequence is MVYSYTEKKRIRKSFGKRPQVLNVPYLLTIQLDSFDKFIQRDPDGQQGLEAAFRSIFPIVSNNGNTELQYVSYQLGEPVFDVRECQIRGTTYAASLRVKLRLVSYDKDAASGTIKDIKEQEVYMGEIPLMTSNGTFVINGTERVVVSQLHRSPGVFFDSDKGKTHSSGKVLYNARIIPYRGSWLDFEFDPKDNLYARIDRRRKLPATIILRALNYTTEEILDLFFDKVSFEIKDNKLLMTLVPERLRGETASFDIEANGKVYIERGRRITARHIKALEKDKITQVEVPTEYIVGKVSAKDYVDLTTGEIICPANMEISLELLEKLSQAGYKNIETLFTNDLDFGPYISETLRVDPSYDRLSALVEIYRMMRPGEPPTKEAAEGLFDNLFFSSERYDLSAVGRMKFNRSLGIEDTTGSGTLSKEDIVNVMRKLIDIRNGRGEVDDIDHLGNRRIRSVGEMAENQFRIGLVRVERAVKERLSLGDLESVTPQDLINAKPISAAVKEFFGSSQLSQFMDQNNPLSEVTHKRRISALGPGGLTRERAGFEVRDVHATHYGRVCPIETPEGPNIGLINSLSVYARTNDYGFLETPYRKVVNGQVTEEIEYLSAIEEGKYVIAQANSNLDGELRFTDAFVTCRGEHGESGLYRPEEIHYMDVSTQQVVSVAAALIPFLEHDDANRALMGANMQRQAVPTLRADKPLVGTGMEKPVALDSGVAVVAKRGGTIQYVDASRIVVKVNEDETIAGEAGIDIYNLIKYTRSNQNTCINQIPCVQLGEPIERGEILADGPSTDLGELALGQNMRVAFMPWNGYNFEDSMLVSERVVQEDRFTTIHIQELSCVARDTKLGSEEITADIPNVGEAALSKLDESGIVYIGAEVKGGDILVGKVTPKGETQLTPEEKLLRAIFGEKASDVKDSSLRVPNGTSGTVIDVQVFTRDGVEKDKRALEIEEMQLKQAKKDLVEELEILEAGLFARVRNLLLSGGFNDKQLENLDRTQWLEQTLVDEDKQNQLEQLAEQYEELRKDFEHKLEIKRSKIIQGDDLAPGVLKVVKVYLAVKRQIQPGDKMAGRHGNKGVISKINPVEDMPYDENGQPVDIVLNPLGVPSRMNIGQILETHLGLAAKGIGDQINAMIKQKQDVEKLRGYIQKAYDLGDGSQKVDLSTFTDEEVLRLAKNLRKGMPLATPVFDGAHEKEIKALLELGGLPTSGQITLFDGRTGEKFERPVTVGYMYMLKLNHLVDDKMHARSTGSYSLVTQQPLGGKAQFGGQRFGEMEVWALEAYGAAYTLQEMLTVKSDDVNGRTKMYKNIVGGTHQMDPGTPESFNVIMKEIRSLGINIDLDEE.

It belongs to the RNA polymerase beta chain family. In terms of assembly, the RNAP catalytic core consists of 2 alpha, 1 beta, 1 beta' and 1 omega subunit. When a sigma factor is associated with the core the holoenzyme is formed, which can initiate transcription.

The catalysed reaction is RNA(n) + a ribonucleoside 5'-triphosphate = RNA(n+1) + diphosphate. Its function is as follows. DNA-dependent RNA polymerase catalyzes the transcription of DNA into RNA using the four ribonucleoside triphosphates as substrates. In Histophilus somni (strain 129Pt) (Haemophilus somnus), this protein is DNA-directed RNA polymerase subunit beta.